Here is a 146-residue protein sequence, read N- to C-terminus: Large ribosomal subunit protein uL15y (146 aa).

Composition is skewed to basic residues over residues 1–14 and 21–30; these read MATA…KRGH and RIGKHRKHPG. Positions 1-38 are disordered; it reads MATALKKNRKKRGHVSAGHGRIGKHRKHPGGRGNAGGM.

The protein belongs to the universal ribosomal protein uL15 family.

This Arabidopsis thaliana (Mouse-ear cress) protein is Large ribosomal subunit protein uL15y (RPL27AB).